Reading from the N-terminus, the 174-residue chain is MLTYGAPFNFPRWIDEHAHLLKPPVGNRQVWQDSDFIVTVVGGPNHRTDYHDDPLEEFFYQLRGNAYLNLWVDGRRERADLKEGDIFLLPPHVRHSPQRPEAGSACLVIERQRPAGMLDGFEWYCDACGHLVHRVEVQLKSIVTDLPPLFESFYASEDKRRCPHCGQVHPGRAA.

Position 47 (arginine 47) interacts with O2. 3 residues coordinate Fe cation: histidine 51, glutamate 57, and histidine 95. Glutamate 57 contacts substrate. 2 residues coordinate substrate: arginine 99 and glutamate 110. Fe cation is bound by residues cysteine 125, cysteine 128, cysteine 162, and cysteine 165.

Belongs to the 3-HAO family. In terms of assembly, homodimer. Fe(2+) serves as cofactor.

The enzyme catalyses 3-hydroxyanthranilate + O2 = (2Z,4Z)-2-amino-3-carboxymuconate 6-semialdehyde. It participates in cofactor biosynthesis; NAD(+) biosynthesis; quinolinate from L-kynurenine: step 3/3. With respect to regulation, inhibited by 4-chloro-3-hydroxyanthranilate. Mechanism of inactivation involves the oxidation of the catalytic active site Fe(2+) to the catalytically inactive Fe(3+) oxidation state, superoxide production, and formation of two disulfide bonds between Cys-125 and Cys-128, and Cys-162 and Cys-165. Enzyme can be reactivated under reducing conditions. In terms of biological role, catalyzes the oxidative ring opening of 3-hydroxyanthranilate to 2-amino-3-carboxymuconate semialdehyde, which spontaneously cyclizes to quinolinate. The chain is 3-hydroxyanthranilate 3,4-dioxygenase from Cupriavidus metallidurans (strain ATCC 43123 / DSM 2839 / NBRC 102507 / CH34) (Ralstonia metallidurans).